A 233-amino-acid chain; its full sequence is EDDIEADHVGFYGISVYQSPGDIGQYTFEFDGDEWFYVDLDKKETVWRLPEFGQLTSFDPQGGLQEIATGKHNLGILTKRSNFTPATNEAPQATVFPKSPVLLGQPNTLICFVDNIFPPVINITWLRNSKSVTDGVYETSFLVNRDHSFHKLSYLTFIPSDDDIYDCKVEHWGLEEPVLKHWEPEIPAPMSELTETVVCALGLSVGLVGIVVGTIFIIQGLRSGGTSRHPGPL.

Residues 1-88 (EDDIEADHVG…KRSNFTPATN (88 aa)) are alpha-1. Over 1–195 (EDDIEADHVG…IPAPMSELTE (195 aa)) the chain is Extracellular. Residues 89-182 (EAPQATVFPK…GLEEPVLKHW (94 aa)) form an alpha-2 region. The Ig-like C1-type domain occupies 91–183 (PQATVFPKSP…LEEPVLKHWE (93 aa)). Cys-111 and Cys-167 are joined by a disulfide. Residue Asn-122 is glycosylated (N-linked (GlcNAc...) asparagine). The tract at residues 183 to 195 (EPEIPAPMSELTE) is connecting peptide. A helical membrane pass occupies residues 196 to 221 (TVVCALGLSVGLVGIVVGTIFIIQGL). Residues 222-233 (RSGGTSRHPGPL) are Cytoplasmic-facing.

This sequence belongs to the MHC class II family.

It localises to the membrane. The polypeptide is H-2 class II histocompatibility antigen, A-F alpha chain (H2-Aa) (Mus musculus (Mouse)).